The sequence spans 1164 residues: Integrin alpha-5 (1164 aa).

The segment covering 1–14 (MREEGGGSREKEGE) has biased composition (basic and acidic residues). The tract at residues 1 to 119 (MREEGGGSRE…MGSRTPGSPL (119 aa)) is disordered. The span at 81-90 (LLPALSHSPL) shows a compositional bias: low complexity. Residues 156-221 (NLDAEAPAVL…CPWGTSPAQC (66 aa)) form an FG-GAP 1 repeat. N-linked (GlcNAc...) asparagine glycosylation is present at Asn197. Cys212 and Cys221 are joined by a disulfide. At Ser240 the chain carries Phosphoserine. 6 FG-GAP repeats span residues 241–301 (SEGE…QILE), 306–358 (RSDF…AESY), 372–424 (QTRQ…GSDI), 425–490 (RSLY…GMEP), 491–550 (TPTL…GLAS), and 554–617 (QVLL…IFPA). Cys269 and Cys289 are joined by a disulfide. Asn295 carries N-linked (GlcNAc...) asparagine glycosylation. Cys305 and Cys318 form a disulfide bridge. Positions 375 and 382 each coordinate a protein. 4 residues coordinate Ca(2+): Glu393, Ser395, Asp397, and Asp401. Residues Asn410, Asn420, and Asn429 are each glycosylated (N-linked (GlcNAc...) asparagine). Positions 447, 449, 451, 453, 455, 514, 516, 518, 520, 522, 578, 580, 582, 584, and 586 each coordinate Ca(2+). Cys626 and Cys635 are disulfide-bonded. Asn637, Asn643, Asn706, and Asn722 each carry an N-linked (GlcNAc...) asparagine glycan. A disulfide bridge connects residues Cys641 and Cys697. Cys758 and Cys764 are disulfide-bonded. N-linked (GlcNAc...) asparagine glycans are attached at residues Asn788, Asn825, Asn837, Asn886, and Asn982. Residues Cys831 and Cys844 are joined by a disulfide bond. 3 cysteine pairs are disulfide-bonded: Cys962-Cys1072, Cys983-Cys1036, and Cys1026-Cys1031. The tract at residues 983-1022 (CTTSHPPNPEGLELDPEGSQHHRLQRRDVPGRSPASSGPQ) is disordered. A helical transmembrane segment spans residues 1114–1134 (LWIIILAILIGLLLLGLLIYI). Over 1135-1164 (LYKLGFFKRSLPYGTAMEKAQLKPPATSDA) the chain is Cytoplasmic. The tract at residues 1136 to 1143 (YKLGFFKR) is interaction with HPS5. The GFFKR motif motif lies at 1139 to 1143 (GFFKR).

This sequence belongs to the integrin alpha chain family. Heterodimer of an alpha and a beta subunit. The alpha subunit is composed of a heavy and a light chain linked by a disulfide bond. Alpha-5 associates with beta-1. Interacts with NISCH. Interacts with HPS5. Interacts with RAB21 and COMP. Interacts with CIB1. ITGA5:ITGB1 interacts with CCN3. ITGA5:ITGB1 interacts with FBN1. ITGA5:ITGB1 interacts with IL1B. ITGA5:ITGB1 interacts with ACE2. ITGA5:ITGB1 interacts with SELP. Interacts with ANGPT2. ITGA5:ITGB1 interacts with IGFBP2. ITGA5:ITGB1 interacts with IGFBP1. Post-translationally, proteolytic cleavage by PCSK5 mediates activation of the precursor.

It localises to the cell membrane. It is found in the cell junction. The protein resides in the focal adhesion. In terms of biological role, integrin alpha-5/beta-1 (ITGA5:ITGB1) is a receptor for fibronectin and fibrinogen. It recognizes the sequence R-G-D in its ligands. ITGA5:ITGB1 binds to PLA2G2A via a site (site 2) which is distinct from the classical ligand-binding site (site 1) and this induces integrin conformational changes and enhanced ligand binding to site 1. ITGA5:ITGB1 acts as a receptor for fibrillin-1 (FBN1) and mediates R-G-D-dependent cell adhesion to FBN1. ITGA5:ITGB1 acts as a receptor for fibronectin (FN1) and mediates R-G-D-dependent cell adhesion to FN1. ITGA5:ITGB1 is a receptor for IL1B and binding is essential for IL1B signaling. ITGA5:ITGB3 is a receptor for soluble CD40LG and is required for CD40/CD40LG signaling. This Bos taurus (Bovine) protein is Integrin alpha-5 (ITGA5).